A 99-amino-acid chain; its full sequence is Small integral membrane protein 14 (99 aa).

Residues 1 to 49 are Lumenal-facing; it reads MAEGGFDPCECVCSHEHAMRRLINLLRQSQSYCTDTECLQELPGPSGDN. Residues 50 to 70 traverse the membrane as a helical segment; it reads GISVTMILVAWMVIALILFLL. Residues 71–99 lie on the Cytoplasmic side of the membrane; the sequence is RPPNLRGSNLPGKPTSPHNGQDPPAPPVD. A disordered region spans residues 77–99; that stretch reads GSNLPGKPTSPHNGQDPPAPPVD.

Its subcellular location is the endoplasmic reticulum membrane. This chain is Small integral membrane protein 14 (SMIM14), found in Pongo abelii (Sumatran orangutan).